We begin with the raw amino-acid sequence, 111 residues long: Cell division topological specificity factor (111 aa).

This sequence belongs to the MinE family.

Prevents the cell division inhibition by proteins MinC and MinD at internal division sites while permitting inhibition at polar sites. This ensures cell division at the proper site by restricting the formation of a division septum at the midpoint of the long axis of the cell. In Prochlorococcus marinus (strain MIT 9312), this protein is Cell division topological specificity factor.